The following is a 442-amino-acid chain: MDRSRTSSQGRDVLPPRGDEGRISPSLDKEKSPGPEDQPDAPPDGGLTAWLVVVGAWCTSFCSFGWVNSVGIFQNYYESHLLKHLSSSTISWIPSLQIFFMFAMGPIVGKLYDTFGARYLIIGGTFFHVFGLMMASISTQYYQLLLSQGICSAIGAAAIFQPALSAVSAWFNRKRGIAFATLSTGSSVGGVIFPIMVDRLIAKVGFGWSMRISAFMILFLLGIAIVTVKARRPPPQGPKPSGVQLLQPFKEPVFIVTLLGYMLLTYGVFIPINYVIVQAVASGMNADLASYLVPMLNGASLFGRLGAGFMSDRYGRYNIFIVMCIVAGVLVLALWIPATSNAPIIVFATLFGFASGAYVSLSPALIAQISPLKEVGYRTGLLFLFASVGGLTTSPIAGAILQNAGGDYTHMKIFSGVMLLGGTAFIITARIVGTGLKLVVKY.

Polar residues predominate over residues 1 to 10 (MDRSRTSSQG). The segment at 1-43 (MDRSRTSSQGRDVLPPRGDEGRISPSLDKEKSPGPEDQPDAPP) is disordered. The segment covering 17-34 (RGDEGRISPSLDKEKSPG) has biased composition (basic and acidic residues). A run of 12 helical transmembrane segments spans residues 47–67 (LTAWLVVVGAWCTSFCSFGWV), 89–109 (TISWIPSLQIFFMFAMGPIVG), 119–139 (YLIIGGTFFHVFGLMMASIST), 150–170 (ICSAIGAAAIFQPALSAVSAW), 177–197 (IAFATLSTGSSVGGVIFPIMV), 206–226 (FGWSMRISAFMILFLLGIAIV), 252–272 (PVFIVTLLGYMLLTYGVFIPI), 288–307 (LASYLVPMLNGASLFGRLGA), 319–339 (IFIVMCIVAGVLVLALWIPAT), 342–362 (APIIVFATLFGFASGAYVSLS), 381–401 (LLFLFASVGGLTTSPIAGAIL), and 413–433 (IFSGVMLLGGTAFIITARIVG).

Belongs to the major facilitator superfamily. Monocarboxylate porter (TC 2.A.1.13) family.

It localises to the cell membrane. It functions in the pathway secondary metabolite biosynthesis. Its function is as follows. MFS transporter; part of the gene cluster that mediates the biosynthesis of aspergillic acid. Probably involved in aspergillic acid metabolism and transport. The sequence is that of MFS transporter asaE from Aspergillus flavus (strain ATCC 200026 / FGSC A1120 / IAM 13836 / NRRL 3357 / JCM 12722 / SRRC 167).